Here is a 467-residue protein sequence, read N- to C-terminus: MTEVFTIKQCLDGEISIDETVTVRGWVKTRRDSKAGLSFISLHDGSCFSPIQIVATDQLSNYHKEVTKLTAGCSMIATGKLVASQGKGQFFEIQAESIEVVGWVENPDTYPIQAKRHTLEFLREVAHLRPRTNTISAVTRVRHSLAQAIHRFYHEQGFFWVHTPIITASDCEGAGEMFRVSTLDLLNIPKNDKGQIDFSKDFFGRETFLTVSGQLNVEAYCMAMSKVYTFGPTFRAENSNTSRHLAEFWMIEPEIAFANLEDICKLSQSMLRYLCKTVLEERADDMDFFNQFVAPGCIERMEHIADSEFEIMTYTDAVKALEASDQKFEFPVSWGLDLQSEHERYLAEVLCKKPVIVTNYPQEIKGFYMRLNDDGKTVAAMDVLAPGIGEIIGGSQREERLEILDRRMDECNLNKEHYQWYRDLRRYGTVPHAGFGLGFERLISYVTGVSNVRDVIPFPRTPGHADY.

This sequence belongs to the class-II aminoacyl-tRNA synthetase family. In terms of assembly, homodimer.

Its subcellular location is the cytoplasm. It catalyses the reaction tRNA(Asn) + L-asparagine + ATP = L-asparaginyl-tRNA(Asn) + AMP + diphosphate + H(+). In Legionella pneumophila (strain Paris), this protein is Asparagine--tRNA ligase.